Reading from the N-terminus, the 841-residue chain is Probable outer membrane protein pmp2 (841 aa).

An N-terminal signal peptide occupies residues 1–24; it reads MKIPLRFLLISLVPTLSMSNLLGA. Residues 537 to 841 form the Autotransporter domain; it reads GAPYEKRFWV…NVDAGSKIKF (305 aa).

Belongs to the PMP outer membrane protein family.

The protein resides in the secreted. The protein localises to the cell wall. Its subcellular location is the cell outer membrane. The sequence is that of Probable outer membrane protein pmp2 (pmp2) from Chlamydia pneumoniae (Chlamydophila pneumoniae).